Here is a 1233-residue protein sequence, read N- to C-terminus: Structural maintenance of chromosomes protein 1A (1233 aa).

An ATP-binding site is contributed by 32–39; it reads GPNGSGKS. 2 coiled-coil regions span residues 104-124 and 163-503; these read EYKINNKVVQLHEYSEELEKL and ELAQ…KAEI. A compositionally biased stretch (basic and acidic residues) spans 284-293; sequence IKEKDSELNQ. 2 disordered regions span residues 284–308 and 348–369; these read IKEKDSELNQKRPQYIKAKENTSHK and QEFEERMEEESQSQGRDLTLEE. Phosphoserine is present on residues S358 and S360. In terms of domain architecture, SMC hinge spans 515–629; that stretch reads VYGRLIDLCQ…DNVEDARRIA (115 aa). 2 positions are modified to N6-acetyllysine: K648 and K713. A coiled-coil region spans residues 667 to 935; it reads DEKAVDKLKE…RHNLLQACKM (269 aa). The segment at 947–969 is disordered; the sequence is MDDISQEEGSSQGEESVSGSQRT. Positions 953 to 967 are enriched in low complexity; sequence EEGSSQGEESVSGSQ. Residues S957, S962, S966, and S970 each carry the phosphoserine modification. Residues 988–1068 adopt a coiled-coil conformation; that stretch reads EDLKDAQAEE…FEQIKKERFD (81 aa). An N6-acetyllysine modification is found at K1037.

Belongs to the SMC family. SMC1 subfamily. Forms a heterodimer with SMC3 in cohesin complexes. Cohesin complexes are composed of the SMC1 (SMC1A or SMC1B) and SMC3 heterodimer attached via their SMC hinge domain, RAD21 which link them, and one STAG protein (STAG1, STAG2 or STAG3), which interacts with RAD21. In germ cell cohesin complexes, SMC1A is mutually exclusive with SMC1B. Interacts with STAG3. Found in a complex with CDCA5, SMC3 and RAD21, PDS5A/SCC-112 and PDS5B/APRIN. Found in a complex containing POLE and SMC3. Interacts with BRCA1, SYCP2, NDC80, RPGR and BRAT1. The cohesin complex interacts with the cohesin loading complex subunits NIPBL/Scc2 (via HEAT repeats) and MAU2/Scc4. NIPBL directly contacts all members of the complex, RAD21, SMC1A/B, SMC3 and STAG1. Phosphorylated upon ionizing radiation or DNA methylation. Phosphorylation of Ser-957 and Ser-966 activates it and is required for S-phase checkpoint activation. In terms of processing, ubiquitinated by the DCX(DCAF15) complex, leading to its degradation. As to expression, ubiquitous (at protein level).

The protein resides in the nucleus. Its subcellular location is the chromosome. The protein localises to the centromere. Involved in chromosome cohesion during cell cycle and in DNA repair. Involved in DNA repair via its interaction with BRCA1 and its related phosphorylation by ATM, and works as a downstream effector in the ATM/NBS1 branch of S-phase checkpoint. Central component of cohesin complex. The cohesin complex is required for the cohesion of sister chromatids after DNA replication. The cohesin complex apparently forms a large proteinaceous ring within which sister chromatids can be trapped. At anaphase, the complex is cleaved and dissociates from chromatin, allowing sister chromatids to segregate. The cohesin complex may also play a role in spindle pole assembly during mitosis. Involved in DNA repair via its interaction with BRCA1 and its related phosphorylation by ATM, or via its phosphorylation by ATR. Works as a downstream effector both in the ATM/NBS1 branch and in the ATR/MSH2 branch of S-phase checkpoint. This chain is Structural maintenance of chromosomes protein 1A (Smc1a), found in Mus musculus (Mouse).